Here is a 333-residue protein sequence, read N- to C-terminus: DNA-directed RNA polymerase subunit alpha (333 aa).

Residues 1-233 (MVREKVKVST…NLFIPFLHVE (233 aa)) are alpha N-terminal domain (alpha-NTD). The tract at residues 267-333 (LVFQYIFIDQ…LEKNRKFISN (67 aa)) is alpha C-terminal domain (alpha-CTD).

It belongs to the RNA polymerase alpha chain family. As to quaternary structure, in plastids the minimal PEP RNA polymerase catalytic core is composed of four subunits: alpha, beta, beta', and beta''. When a (nuclear-encoded) sigma factor is associated with the core the holoenzyme is formed, which can initiate transcription.

It is found in the plastid. The protein resides in the chloroplast. The catalysed reaction is RNA(n) + a ribonucleoside 5'-triphosphate = RNA(n+1) + diphosphate. Functionally, DNA-dependent RNA polymerase catalyzes the transcription of DNA into RNA using the four ribonucleoside triphosphates as substrates. The protein is DNA-directed RNA polymerase subunit alpha of Aethionema grandiflorum (Persian stone-cress).